The primary structure comprises 154 residues: Transcription antitermination protein NusB (154 aa).

The protein belongs to the NusB family.

In terms of biological role, involved in transcription antitermination. Required for transcription of ribosomal RNA (rRNA) genes. Binds specifically to the boxA antiterminator sequence of the ribosomal RNA (rrn) operons. The sequence is that of Transcription antitermination protein NusB from Rickettsia typhi (strain ATCC VR-144 / Wilmington).